The sequence spans 193 residues: Segregation and condensation protein B (193 aa).

The protein belongs to the ScpB family. In terms of assembly, homodimer. Homodimerization may be required to stabilize the binding of ScpA to the Smc head domains. Component of a cohesin-like complex composed of ScpA, ScpB and the Smc homodimer, in which ScpA and ScpB bind to the head domain of Smc. The presence of the three proteins is required for the association of the complex with DNA.

It localises to the cytoplasm. Participates in chromosomal partition during cell division. May act via the formation of a condensin-like complex containing Smc and ScpA that pull DNA away from mid-cell into both cell halves. This Clostridium botulinum (strain Kyoto / Type A2) protein is Segregation and condensation protein B.